A 152-amino-acid chain; its full sequence is 3-hydroxyacyl-[acyl-carrier-protein] dehydratase FabZ (152 aa).

The active site involves H58.

This sequence belongs to the thioester dehydratase family. FabZ subfamily.

The protein localises to the cytoplasm. It catalyses the reaction a (3R)-hydroxyacyl-[ACP] = a (2E)-enoyl-[ACP] + H2O. Functionally, involved in unsaturated fatty acids biosynthesis. Catalyzes the dehydration of short chain beta-hydroxyacyl-ACPs and long chain saturated and unsaturated beta-hydroxyacyl-ACPs. This chain is 3-hydroxyacyl-[acyl-carrier-protein] dehydratase FabZ, found in Synechococcus sp. (strain RCC307).